The following is a 220-amino-acid chain: Cytidylate kinase (220 aa).

Gly10–Thr18 is a binding site for ATP.

This sequence belongs to the cytidylate kinase family. Type 1 subfamily.

The protein localises to the cytoplasm. The catalysed reaction is CMP + ATP = CDP + ADP. It carries out the reaction dCMP + ATP = dCDP + ADP. In Lactococcus lactis subsp. cremoris (strain MG1363), this protein is Cytidylate kinase.